The chain runs to 354 residues: Nicotinate-nucleotide--dimethylbenzimidazole phosphoribosyltransferase (354 aa).

The active-site Proton acceptor is the E313.

The protein belongs to the CobT family.

The enzyme catalyses 5,6-dimethylbenzimidazole + nicotinate beta-D-ribonucleotide = alpha-ribazole 5'-phosphate + nicotinate + H(+). Its pathway is nucleoside biosynthesis; alpha-ribazole biosynthesis; alpha-ribazole from 5,6-dimethylbenzimidazole: step 1/2. Functionally, catalyzes the synthesis of alpha-ribazole-5'-phosphate from nicotinate mononucleotide (NAMN) and 5,6-dimethylbenzimidazole (DMB). The protein is Nicotinate-nucleotide--dimethylbenzimidazole phosphoribosyltransferase of Ralstonia nicotianae (strain ATCC BAA-1114 / GMI1000) (Ralstonia solanacearum).